Here is a 406-residue protein sequence, read N- to C-terminus: Acetyltransferase sirH (406 aa).

6 consecutive transmembrane segments (helical) span residues 9-29, 32-52, 63-83, 295-315, 323-343, and 358-378; these read IFIE…FALG, AHTF…CQSL, LLSN…WILL, VQLF…ALLC, SALF…HVIA, and FIGF…WVGS.

The protein belongs to the wax synthase family.

It is found in the membrane. The protein operates within mycotoxin biosynthesis. In terms of biological role, acetyltransferase; part of the gene cluster that mediates the biosynthesis of sirodesmin PL, an epipolythiodioxopiperazine (ETP) characterized by a disulfide bridged cyclic dipeptide and that acts as a phytotoxin which is involved in the blackleg didease of canola. SirD catalyzes the O-prenylation of L-tyrosine (L-Tyr) in the presence of dimethylallyl diphosphate (DMAPP) to yield 4-O-dimethylallyl-L-Tyr, and therefore represents probably the first pathway-specific enzyme in the biosynthesis of sirodesmin PL. 4-O-dimethylallyl-L-Tyr, then undergoes condensation with L-Ser in a reaction catalyzed by the non-ribosomal peptide synthase sirP to form the diketopiperazine (DKP) backbone. Further bishydroxylation of the DKP performed by the cytochrome P450 monooxygenase sirC leads to the production of the intermediate phomamide. This step is essential to form the reactive thiol group required for toxicity of sirodesmin PL. The next steps of sirodesmin biosynthesis are not well understood yet, but some predictions could be made from intermediate compounds identification. Phomamide is converted into phomalizarine via oxidation, probably by sirT. Further oxidation, methylation (by sirM or sirN) and reduction steps convert phomalizarine to deacetyl sirodesmin. Finally, acetyltransferase sirH probably acetylates deacetyl sirodesmin to produce sirodesmin PL. The sequence is that of Acetyltransferase sirH from Leptosphaeria maculans (Blackleg fungus).